Here is a 435-residue protein sequence, read N- to C-terminus: Light-independent protochlorophyllide reductase subunit N (435 aa).

Residues Cys23, Cys48, and Cys108 each contribute to the [4Fe-4S] cluster site.

The protein belongs to the BchN/ChlN family. As to quaternary structure, protochlorophyllide reductase is composed of three subunits; ChlL, ChlN and ChlB. Forms a heterotetramer of two ChlB and two ChlN subunits. It depends on [4Fe-4S] cluster as a cofactor.

It is found in the plastid. The protein localises to the chloroplast. The enzyme catalyses chlorophyllide a + oxidized 2[4Fe-4S]-[ferredoxin] + 2 ADP + 2 phosphate = protochlorophyllide a + reduced 2[4Fe-4S]-[ferredoxin] + 2 ATP + 2 H2O. It functions in the pathway porphyrin-containing compound metabolism; chlorophyll biosynthesis (light-independent). Its function is as follows. Component of the dark-operative protochlorophyllide reductase (DPOR) that uses Mg-ATP and reduced ferredoxin to reduce ring D of protochlorophyllide (Pchlide) to form chlorophyllide a (Chlide). This reaction is light-independent. The NB-protein (ChlN-ChlB) is the catalytic component of the complex. This chain is Light-independent protochlorophyllide reductase subunit N, found in Chlorella vulgaris (Green alga).